The sequence spans 172 residues: Ribosome maturation factor RimM (172 aa).

A PRC barrel domain is found at 94-167; sequence EGSYYYKDII…VAHVIVPEGL (74 aa).

This sequence belongs to the RimM family. As to quaternary structure, binds ribosomal protein uS19.

It is found in the cytoplasm. An accessory protein needed during the final step in the assembly of 30S ribosomal subunit, possibly for assembly of the head region. Essential for efficient processing of 16S rRNA. May be needed both before and after RbfA during the maturation of 16S rRNA. It has affinity for free ribosomal 30S subunits but not for 70S ribosomes. The sequence is that of Ribosome maturation factor RimM from Lacticaseibacillus paracasei (strain ATCC 334 / BCRC 17002 / CCUG 31169 / CIP 107868 / KCTC 3260 / NRRL B-441) (Lactobacillus paracasei).